The primary structure comprises 592 residues: Sodium- and chloride-dependent transporter XTRP3 (592 aa).

Topologically, residues Met1 to Arg5 are cytoplasmic. The chain crosses the membrane as a helical span at residues Pro6 to Gly26. The Extracellular portion of the chain corresponds to Asn27–Ser42. A helical membrane pass occupies residues Phe43–Leu63. Topologically, residues Ala64 to Thr79 are cytoplasmic. Residues Ile80–Met100 traverse the membrane as a helical segment. The Extracellular segment spans residues Tyr101–Gly165. Asn131 carries N-linked (GlcNAc...) asparagine glycosylation. Residues Val166 to Leu186 form a helical membrane-spanning segment. At Arg187–Lys194 the chain is on the cytoplasmic side. A helical transmembrane segment spans residues Val195 to Leu215. Residues Thr216 to Trp241 are Extracellular-facing. A helical transmembrane segment spans residues Ile242 to Phe262. Residues Ala263–Ala276 are Cytoplasmic-facing. A helical transmembrane segment spans residues Ile277–Ile297. At Tyr298–Gln389 the chain is on the extracellular side. Asn357 carries an N-linked (GlcNAc...) asparagine glycan. The chain crosses the membrane as a helical span at residues Leu390 to Asn410. The Cytoplasmic portion of the chain corresponds to Thr411–Glu431. Residues Ala432–Ala452 traverse the membrane as a helical segment. The Extracellular portion of the chain corresponds to Gly453–Ala465. Residues Thr466–Leu486 traverse the membrane as a helical segment. Residues Arg487 to Tyr504 lie on the Cytoplasmic side of the membrane. Residues Trp505–Leu525 form a helical membrane-spanning segment. At Ser526–Tyr554 the chain is on the extracellular side. The helical transmembrane segment at Ala555 to Leu575 threads the bilayer. Residues Gly576–Ala592 lie on the Cytoplasmic side of the membrane.

The protein belongs to the sodium:neurotransmitter symporter (SNF) (TC 2.A.22) family. SLC6A20 subfamily. As to expression, kidney and small intestine. Expressed in the S3 segment of the proximal tubule. Expressed in neurons.

It is found in the apical cell membrane. The catalysed reaction is L-proline(out) + chloride(out) + 2 Na(+)(out) = L-proline(in) + chloride(in) + 2 Na(+)(in). It carries out the reaction L-pipecolate(out) + chloride(out) + 2 Na(+)(out) = L-pipecolate(in) + chloride(in) + 2 Na(+)(in). The enzyme catalyses sarcosine(out) + chloride(out) + 2 Na(+)(out) = sarcosine(in) + chloride(in) + 2 Na(+)(in). It catalyses the reaction N-methyl-L-proline(out) + chloride(out) + 2 Na(+)(out) = N-methyl-L-proline(in) + chloride(in) + 2 Na(+)(in). The catalysed reaction is 2-methyl-2-(methylamino)propanoate(out) + chloride(out) + 2 Na(+)(out) = 2-methyl-2-(methylamino)propanoate(in) + chloride(in) + 2 Na(+)(in). It carries out the reaction glycine betaine(out) + chloride(out) + 2 Na(+)(out) = glycine betaine(in) + chloride(in) + 2 Na(+)(in). The enzyme catalyses glycine(out) + chloride(out) + 2 Na(+)(out) = glycine(in) + chloride(in) + 2 Na(+)(in). Functionally, mediates the Na(+)- and Cl(-)-dependent uptake of imino acids such as L-proline, N-methyl-L-proline and pipecolate as well as N-methylated amino acids. Also transports glycine, regulates proline and glycine homeostasis in the brain playing a role in the modulation of NMDAR currents. The chain is Sodium- and chloride-dependent transporter XTRP3 from Homo sapiens (Human).